The primary structure comprises 336 residues: Transcription initiation factor IIB (336 aa).

The segment at 41-72 (QKLRCPICGNTVFIEDAERGQIVCASCGYVLM) adopts a TFIIB-type zinc-finger fold. Zn(2+) contacts are provided by Cys-45, Cys-48, Cys-64, and Cys-67. 2 tandem repeats follow at residues 152-235 (HELN…AREL) and 246-327 (QYVP…ELAK).

Belongs to the TFIIB family.

Stabilizes TBP binding to an archaeal box-A promoter. Also responsible for recruiting RNA polymerase II to the pre-initiation complex (DNA-TBP-TFIIB). This chain is Transcription initiation factor IIB, found in Caldivirga maquilingensis (strain ATCC 700844 / DSM 13496 / JCM 10307 / IC-167).